The chain runs to 2179 residues: Genome polyprotein (2179 aa).

The interval 1–20 (MGAQVSTQKSGSHENQNILT) is disordered. Gly-2 is lipidated: N-myristoyl glycine; by host. Residues 2-1491 (GAQVSTQKSG…AMNQASMIIN (1490 aa)) are Cytoplasmic-facing. Residues 564–584 (ALTEGLGDELEEVIVEKTKQT) are amphipathic alpha-helix. Catalysis depends on for protease 2A activity residues His-876 and Asp-894. Zn(2+)-binding residues include Cys-911 and Cys-913. Residue Cys-965 is the For protease 2A activity of the active site. Zn(2+) is bound by residues Cys-971 and His-973. The tract at residues 1101 to 1173 (NDGWFRKFND…HISNPTQEKR (73 aa)) is membrane-binding. The segment at 1101–1239 (NDGWFRKFND…TPGSGKSLTT (139 aa)) is oligomerization. Positions 1122-1126 (ANKIS) are RNA-binding. The region spanning 1205–1361 (KNKMVNYMQF…TTYTKNGKLN (157 aa)) is the SF3 helicase domain. Residues Cys-1369, Cys-1372, Cys-1381, and Cys-1386 each contribute to the Zn(2+) site. The C4-type zinc-finger motif lies at 1369–1386 (CKDCHQPSNFKKCCPLVC). An RNA-binding region spans residues 1413 to 1420 (DFKSKMQI). Positions 1424–1429 (LETLFQ) are oligomerization. Residues 1492–1507 (TILMFVSTLGIVYVIY) lie within the membrane without spanning it. Topologically, residues 1508–2179 (KLFAQTQGPY…VLRRRWLDLF (672 aa)) are cytoplasmic. Tyr-1517 is modified (O-(5'-phospho-RNA)-tyrosine). Positions 1538-1715 (GPNTEFALSL…FSAQLKKQYF (178 aa)) constitute a Peptidase C3 domain. Residues His-1577, Glu-1608, and Cys-1683 each act as for protease 3C activity in the active site. A RdRp catalytic domain is found at 1946–2060 (GHLMAFDYSN…SYPYELDPQV (115 aa)). Mg(2+)-binding residues include Asp-1952 and Asp-2046.

The protein belongs to the picornaviruses polyprotein family. In terms of assembly, interacts with capsid protein VP1 and capsid protein VP3 to form heterotrimeric protomers. Interacts with capsid protein VP0, and capsid protein VP3 to form heterotrimeric protomers. Five protomers subsequently associate to form pentamers which serve as building blocks for the capsid. Interacts with capsid protein VP2, capsid protein VP3 and capsid protein VP4 following cleavage of capsid protein VP0. Interacts with host ICAM1. As to quaternary structure, interacts with capsid protein VP1 and capsid protein VP3 in the mature capsid. In terms of assembly, interacts with capsid protein VP0 and capsid protein VP1 to form heterotrimeric protomers. Five protomers subsequently associate to form pentamers which serve as building blocks for the capsid. Interacts with capsid protein VP4 in the mature capsid. Interacts with protein 2C; this interaction may be important for virion morphogenesis. Interacts with capsid protein VP1 and capsid protein VP3. As to quaternary structure, homodimer. In terms of assembly, homohexamer; forms a hexameric ring structure with 6-fold symmetry characteristic of AAA+ ATPases. Interacts (via N-terminus) with host RTN3 (via reticulon domain); this interaction is important for viral replication. Interacts with capsid protein VP3; this interaction may be important for virion morphogenesis. Interacts with protein 3CD. As to quaternary structure, homodimer. Interacts with host GBF1. Interacts (via GOLD domain) with host ACBD3 (via GOLD domain); this interaction allows the formation of a viral protein 3A/ACBD3 heterotetramer with a 2:2 stoichiometry, which will stimulate the recruitment of host PI4KB in order to synthesize PI4P at the viral RNA replication sites. In terms of assembly, interacts with RNA-directed RNA polymerase. Interacts with protein 3AB and with RNA-directed RNA polymerase. As to quaternary structure, interacts with Viral protein genome-linked and with protein 3CD. Requires Mg(2+) as cofactor. In terms of processing, specific enzymatic cleavages in vivo by the viral proteases yield processing intermediates and the mature proteins. Myristoylation is required for the formation of pentamers during virus assembly. Further assembly of 12 pentamers and a molecule of genomic RNA generates the provirion. Post-translationally, during virion maturation, immature virions are rendered infectious following cleavage of VP0 into VP4 and VP2. This maturation seems to be an autocatalytic event triggered by the presence of RNA in the capsid and it is followed by a conformational change infectious virion. In terms of processing, myristoylation is required during RNA encapsidation and formation of the mature virus particle. VPg is uridylylated by the polymerase into VPg-pUpU. This acts as a nucleotide-peptide primer for the genomic RNA replication.

The protein localises to the virion. Its subcellular location is the host cytoplasm. It is found in the host cytoplasmic vesicle membrane. The protein resides in the host nucleus. The catalysed reaction is a ribonucleoside 5'-triphosphate + H2O = a ribonucleoside 5'-diphosphate + phosphate + H(+). The enzyme catalyses Selective cleavage of Tyr-|-Gly bond in the picornavirus polyprotein.. It carries out the reaction RNA(n) + a ribonucleoside 5'-triphosphate = RNA(n+1) + diphosphate. It catalyses the reaction Selective cleavage of Gln-|-Gly bond in the poliovirus polyprotein. In other picornavirus reactions Glu may be substituted for Gln, and Ser or Thr for Gly.. Its activity is regulated as follows. Replication or transcription is subject to high level of random mutations by the nucleotide analog ribavirin. In terms of biological role, forms an icosahedral capsid of pseudo T=3 symmetry with capsid proteins VP2 and VP3. The capsid is 300 Angstroms in diameter, composed of 60 copies of each capsid protein and enclosing the viral positive strand RNA genome. Capsid protein VP1 mainly forms the vertices of the capsid. Capsid protein VP1 interacts with host ICAM1 to provide virion attachment to target host cells. This attachment induces virion internalization. Tyrosine kinases are probably involved in the entry process. After binding to its receptor, the capsid undergoes conformational changes. Capsid protein VP1 N-terminus (that contains an amphipathic alpha-helix) and capsid protein VP4 are externalized. Together, they shape a pore in the host membrane through which viral genome is translocated to host cell cytoplasm. After genome has been released, the channel shrinks. Forms an icosahedral capsid of pseudo T=3 symmetry with capsid proteins VP2 and VP3. The capsid is 300 Angstroms in diameter, composed of 60 copies of each capsid protein and enclosing the viral positive strand RNA genome. Its function is as follows. Lies on the inner surface of the capsid shell. After binding to the host receptor, the capsid undergoes conformational changes. Capsid protein VP4 is released, Capsid protein VP1 N-terminus is externalized, and together, they shape a pore in the host membrane through which the viral genome is translocated into the host cell cytoplasm. Functionally, component of immature procapsids, which is cleaved into capsid proteins VP4 and VP2 after maturation. Allows the capsid to remain inactive before the maturation step. In terms of biological role, cysteine protease that cleaves viral polyprotein and specific host proteins. It is responsible for the autocatalytic cleavage between the P1 and P2 regions, which is the first cleavage occurring in the polyprotein. Also cleaves the host translation initiation factor EIF4G1, in order to shut down the capped cellular mRNA translation. Inhibits the host nucleus-cytoplasm protein and RNA trafficking by cleaving host members of the nuclear pores including NUP62 and NUP153. Counteracts stress granule formation probably by antagonizing its assembly or promoting its dissassembly. Plays an essential role in the virus replication cycle by acting as a viroporin. Creates a pore in the host endoplasmic reticulum and as a consequence releases Ca2+ in the cytoplasm of infected cell. In turn, high levels of cytoplasmic calcium may trigger membrane trafficking and transport of viral ER-associated proteins to viroplasms, sites of viral genome replication. Its function is as follows. Induces and associates with structural rearrangements of intracellular membranes. Displays RNA-binding, nucleotide binding and NTPase activities. May play a role in virion morphogenesis and viral RNA encapsidation by interacting with the capsid protein VP3. Functionally, localizes the viral replication complex to the surface of membranous vesicles. Together with protein 3CD binds the Cis-Active RNA Element (CRE) which is involved in RNA synthesis initiation. Acts as a cofactor to stimulate the activity of 3D polymerase, maybe through a nucleid acid chaperone activity. In terms of biological role, localizes the viral replication complex to the surface of membranous vesicles. It inhibits host cell endoplasmic reticulum-to-Golgi apparatus transport and causes the disassembly of the Golgi complex, possibly through GBF1 interaction. This would result in depletion of MHC, trail receptors and IFN receptors at the host cell surface. Plays an essential role in viral RNA replication by recruiting ACBD3 and PI4KB at the viral replication sites, thereby allowing the formation of the rearranged membranous structures where viral replication takes place. Acts as a primer for viral RNA replication and remains covalently bound to viral genomic RNA. VPg is uridylylated prior to priming replication into VPg-pUpU. The oriI viral genomic sequence may act as a template for this. The VPg-pUpU is then used as primer on the genomic RNA poly(A) by the RNA-dependent RNA polymerase to replicate the viral genome. During genome replication, the VPg-RNA linkage is removed by the host TDP2, thereby accelerating replication. During the late stage of the replication cycle, host TDP2 is excluded from sites of viral RNA synthesis and encapsidation, allowing for the generation of progeny virions. Its function is as follows. Involved in the viral replication complex and viral polypeptide maturation. It exhibits protease activity with a specificity and catalytic efficiency that is different from protease 3C. Protein 3CD lacks polymerase activity. Protein 3CD binds to the 5'UTR of the viral genome. Functionally, major viral protease that mediates proteolytic processing of the polyprotein. Cleaves host EIF5B, contributing to host translation shutoff. Cleaves also host PABPC1, contributing to host translation shutoff. Cleaves host NLRP1, triggers host N-glycine-mediated degradation of the autoinhibitory NLRP1 N-terminal fragment. In terms of biological role, replicates the viral genomic RNA on the surface of intracellular membranes. May form linear arrays of subunits that propagate along a strong head-to-tail interaction called interface-I. Covalently attaches UMP to a tyrosine of VPg, which is used to prime RNA synthesis. The positive stranded RNA genome is first replicated at virus induced membranous vesicles, creating a dsRNA genomic replication form. This dsRNA is then used as template to synthesize positive stranded RNA genomes. ss(+)RNA genomes are either translated, replicated or encapsidated. This Homo sapiens (Human) protein is Genome polyprotein.